We begin with the raw amino-acid sequence, 293 residues long: Epimerase family protein SDR39U1 (293 aa).

NADP(+)-binding positions include 31–32 (SR), 58–59 (LA), glutamate 77, arginine 82, and valine 160.

Belongs to the NAD(P)-dependent epimerase/dehydratase family. SDR39U1 subfamily.

Functionally, putative NADP-dependent oxidoreductase. This chain is Epimerase family protein SDR39U1 (Sdr39u1), found in Mus musculus (Mouse).